A 264-amino-acid chain; its full sequence is Thymidylate synthase (264 aa).

Arg21 contributes to the dUMP binding site. (6R)-5,10-methylene-5,6,7,8-tetrahydrofolate is bound at residue His51. DUMP is bound at residue 126 to 127 (RR). The active-site Nucleophile is the Cys146. DUMP-binding positions include 166–169 (RSGD), Asn177, and 207–209 (HLY). Asp169 is a (6R)-5,10-methylene-5,6,7,8-tetrahydrofolate binding site. A (6R)-5,10-methylene-5,6,7,8-tetrahydrofolate-binding site is contributed by Ala263.

The protein belongs to the thymidylate synthase family. Bacterial-type ThyA subfamily. As to quaternary structure, homodimer.

Its subcellular location is the cytoplasm. The catalysed reaction is dUMP + (6R)-5,10-methylene-5,6,7,8-tetrahydrofolate = 7,8-dihydrofolate + dTMP. The protein operates within pyrimidine metabolism; dTTP biosynthesis. Catalyzes the reductive methylation of 2'-deoxyuridine-5'-monophosphate (dUMP) to 2'-deoxythymidine-5'-monophosphate (dTMP) while utilizing 5,10-methylenetetrahydrofolate (mTHF) as the methyl donor and reductant in the reaction, yielding dihydrofolate (DHF) as a by-product. This enzymatic reaction provides an intracellular de novo source of dTMP, an essential precursor for DNA biosynthesis. The chain is Thymidylate synthase from Xanthomonas oryzae pv. oryzae (strain MAFF 311018).